We begin with the raw amino-acid sequence, 130 residues long: Iron-sulfur cluster insertion protein ErpA (130 aa).

Residues C46, C116, and C118 each contribute to the iron-sulfur cluster site.

It belongs to the HesB/IscA family. In terms of assembly, homodimer. It depends on iron-sulfur cluster as a cofactor.

Functionally, required for insertion of 4Fe-4S clusters for at least IspG. The protein is Iron-sulfur cluster insertion protein ErpA of Legionella pneumophila (strain Lens).